The chain runs to 187 residues: Auxin-binding protein T85 (187 aa).

The N-terminal stretch at 1-20 (MARHVLVVVAVLLFATAEAS) is a signal peptide. The cysteines at positions 22 and 177 are disulfide-linked. The Zn(2+) site is built by His-78, His-80, and Glu-84. Asn-117 carries N-linked (GlcNAc...) asparagine glycosylation. His-128 lines the Zn(2+) pocket. The Prevents secretion from ER motif lies at 184–187 (KDEL).

Homodimer.

Its subcellular location is the endoplasmic reticulum lumen. This is probably a receptor for the plant hormone auxin. This chain is Auxin-binding protein T85 (T85), found in Nicotiana tabacum (Common tobacco).